The primary structure comprises 346 residues: C5a anaphylatoxin chemotactic receptor 1 (346 aa).

The Extracellular segment spans residues 1-33; it reads MDDNNSDWTSYDFGNDTIPSPNEISLSHIGTRH. Residues Asn4 and Asn15 are each glycosylated (N-linked (GlcNAc...) asparagine). A helical transmembrane segment spans residues 34–60; it reads WITLVCYGIVFLLGVPGNALVVWVTGF. Residues 61-65 are Cytoplasmic-facing; it reads RMPNS. The chain crosses the membrane as a helical span at residues 66–89; sequence VNAQWFLNLAIADLLCCLSLPILM. Topologically, residues 90 to 106 are extracellular; it reads VPLAQDQHWPFGALACK. Cys105 and Cys183 form a disulfide bridge. The chain crosses the membrane as a helical span at residues 107–128; sequence LFSGIFYMMMYCSVLLLVVISL. Residues 129–149 lie on the Cytoplasmic side of the membrane; that stretch reads DRFLLVTKPVWCQNNRQPRQA. The chain crosses the membrane as a helical span at residues 150–170; it reads RILCFIIWILGLLGSSPYFAH. The Extracellular portion of the chain corresponds to 171-194; that stretch reads MEIQHHSETKTVCTGSYSSLGHAW. The chain crosses the membrane as a helical span at residues 195 to 220; the sequence is AITIIRSFLFFLLPFLIICISHWKVY. Topologically, residues 221–238 are cytoplasmic; sequence HMTSSGRRQRDKSSRTLR. Residues 239-261 traverse the membrane as a helical segment; the sequence is VILALVLGFFLCWTPLHIVDLLI. Residues 262–279 lie on the Extracellular side of the membrane; sequence LVSDQPSERFEVNLNLAH. Residues 280 to 300 form a helical membrane-spanning segment; it reads VLTLCLAYINSCLNPLLYVCL. At 301-346 the chain is on the cytoplasmic side; the sequence is GRGFKENLISSLRSVLHFASEAPTHGPSMTTNSKSTTDGVFREKPV. Positions 323 to 346 are disordered; that stretch reads PTHGPSMTTNSKSTTDGVFREKPV. The segment covering 327–338 has biased composition (polar residues); that stretch reads PSMTTNSKSTTD.

This sequence belongs to the G-protein coupled receptor 1 family.

It localises to the cell membrane. Its function is as follows. Receptor for the chemotactic and inflammatory peptide anaphylatoxin C5a. This receptor stimulates chemotaxis, granule enzyme release and superoxide anion production. The sequence is that of C5a anaphylatoxin chemotactic receptor 1 (c5ar1) from Danio rerio (Zebrafish).